A 73-amino-acid chain; its full sequence is Copper chaperone ATX1 (73 aa).

Residues I4–R68 enclose the HMA domain. Residues C15 and C18 each coordinate Cu(+).

This sequence belongs to the ATX1 family. In terms of assembly, homodimer. Interacts with CCC2 via the copper anion.

The protein resides in the cytoplasm. With respect to regulation, tetrathiomolybdate directly and reversibly down-regulates copper delivery to secreted metalloenzymes. Copper homeostasis factor that specifically transports copper to the secretory pathway for incorporation into copper enzymes destined for the cell surface or extracellular milieu. Shuttles copper to the transport ATPase CCC2 on a post-Golgi vesicle for eventual targeting to the cell-surface high-affinity iron uptake protein FET3. Protects against oxygen toxicity. This is Copper chaperone ATX1 from Saccharomyces cerevisiae (strain ATCC 204508 / S288c) (Baker's yeast).